We begin with the raw amino-acid sequence, 183 residues long: ATP synthase subunit delta (183 aa).

It belongs to the ATPase delta chain family. In terms of assembly, F-type ATPases have 2 components, F(1) - the catalytic core - and F(0) - the membrane proton channel. F(1) has five subunits: alpha(3), beta(3), gamma(1), delta(1), epsilon(1). CF(0) has four main subunits: a(1), b(1), b'(1) and c(10-14). The alpha and beta chains form an alternating ring which encloses part of the gamma chain. F(1) is attached to F(0) by a central stalk formed by the gamma and epsilon chains, while a peripheral stalk is formed by the delta, b and b' chains.

Its subcellular location is the cellular thylakoid membrane. F(1)F(0) ATP synthase produces ATP from ADP in the presence of a proton or sodium gradient. F-type ATPases consist of two structural domains, F(1) containing the extramembraneous catalytic core and F(0) containing the membrane proton channel, linked together by a central stalk and a peripheral stalk. During catalysis, ATP synthesis in the catalytic domain of F(1) is coupled via a rotary mechanism of the central stalk subunits to proton translocation. In terms of biological role, this protein is part of the stalk that links CF(0) to CF(1). It either transmits conformational changes from CF(0) to CF(1) or is implicated in proton conduction. In Nostoc sp. (strain PCC 7120 / SAG 25.82 / UTEX 2576), this protein is ATP synthase subunit delta.